The following is a 1061-amino-acid chain: Ceruloplasmin (1061 aa).

The first 19 residues, 1-19 (MKFLLLSTFIFLYSSLALA), serve as a signal peptide directing secretion. Plastocyanin-like domains lie at 20 to 199 (RDKH…LILC), 208 to 356 (KEKN…VRDC), 369 to 555 (HVRH…MKIC), 565 to 713 (RQKD…VNQC), 725 to 895 (GERT…LIVC), and 903 to 1057 (FSPK…VEQE). Y55, G64, and Y67 together coordinate Na(+). The Cu(2+) site is built by H120 and H122. H120 contributes to the O2 binding site. Residue K128 participates in Ca(2+) binding. N138 carries N-linked (GlcNAc...) asparagine glycosylation. Ca(2+) contacts are provided by Q143, D146, and D147. A disulfide bridge connects residues C173 and C199. Residues H179 and H181 each contribute to the Cu(2+) site. An O2-binding site is contributed by H179. Residue N226 is glycosylated (N-linked (GlcNAc...) asparagine). S255 is a Na(+) binding site. C275 and C356 are disulfide-bonded. Positions 294, 337, and 342 each coordinate Cu(2+). N396 carries N-linked (GlcNAc...) asparagine glycosylation. Na(+) contacts are provided by F407, G416, and Y419. C529 and C555 are disulfide-bonded. An N-linked (GlcNAc...) asparagine glycan is attached at N583. Residue S612 participates in Na(+) binding. Residues C632 and C713 are joined by a disulfide bond. Cu(2+) contacts are provided by H651, C694, H699, and M704. C694 acts as the Nucleophile; for glutathione peroxidase activity in catalysis. N-linked (GlcNAc...) asparagine glycosylation is present at N757. F762, G771, and Y774 together coordinate Na(+). A disulfide bond links C869 and C895. N921 carries an N-linked (GlcNAc...) asparagine glycan. Na(+) is bound at residue S950. Residues H989, H992, H994, H1034, C1035, H1036, H1040, and M1045 each contribute to the Cu(2+) site. O2 contacts are provided by H992 and H994. Residue H1036 participates in O2 binding.

This sequence belongs to the multicopper oxidase family. Found in a complex with MPO and LTF; interacts directly with MPO and LTF, which allows Fe(3+) incorporation into LTF, activation of CP ferroxidase activity and protection of CP antioxidant properties by MPO. Cu(2+) serves as cofactor. In terms of tissue distribution, expressed in many tissues, including liver, eye and brain.

The protein localises to the secreted. The catalysed reaction is 4 Fe(2+) + O2 + 4 H(+) = 4 Fe(3+) + 2 H2O. The enzyme catalyses 4 Cu(+) + O2 + 4 H(+) = 4 Cu(2+) + 2 H2O. It carries out the reaction a hydroperoxide + 2 glutathione = an alcohol + glutathione disulfide + H2O. It catalyses the reaction 4 nitric oxide + O2 + 2 H2O = 4 nitrite + 4 H(+). The catalysed reaction is 2 glutathione + H2O2 = glutathione disulfide + 2 H2O. In terms of biological role, multifunctional blue, copper-binding (6-7 atoms per molecule) glycoprotein. It has ferroxidase activity oxidizing Fe(2+) to Fe(3+) without releasing radical oxygen species. It is involved in iron transport across the cell membrane. Copper ions provide a large number of enzymatic activites. Oxidizes highly toxic ferrous ions to the ferric state for further incorporation onto apo-transferrins, catalyzes Cu(+) oxidation and promotes the oxidation of biogenic amines such as norepinephrin and serotonin. Provides Cu(2+) ions for the ascorbate-mediated deaminase degradation of the heparan sulfate chains of GPC1. Has glutathione peroxidase-like activity, can remove both hydrogen peroxide and lipid hydroperoxide in the presence of thiols. Also shows NO-oxidase and NO2 synthase activities that determine endocrine NO homeostasis. In Mus musculus (Mouse), this protein is Ceruloplasmin (Cp).